Reading from the N-terminus, the 44-residue chain is Photosystem I reaction center subunit IX (44 aa).

A helical transmembrane segment spans residues 7-27; sequence YLSVAPVLTTLWFGSLAGLLI.

This sequence belongs to the PsaJ family.

It is found in the plastid. The protein resides in the chloroplast thylakoid membrane. Functionally, may help in the organization of the PsaE and PsaF subunits. The chain is Photosystem I reaction center subunit IX from Liriodendron tulipifera (Tuliptree).